A 215-amino-acid polypeptide reads, in one-letter code: UPF0502 protein Gbem_0102 (215 aa).

The protein belongs to the UPF0502 family.

The protein is UPF0502 protein Gbem_0102 of Citrifermentans bemidjiense (strain ATCC BAA-1014 / DSM 16622 / JCM 12645 / Bem) (Geobacter bemidjiensis).